The sequence spans 282 residues: Formamidopyrimidine-DNA glycosylase (282 aa).

P2 acts as the Schiff-base intermediate with DNA in catalysis. E3 functions as the Proton donor in the catalytic mechanism. K60 acts as the Proton donor; for beta-elimination activity in catalysis. Residues H99, R118, and R163 each contribute to the DNA site. The segment at W248–A282 adopts an FPG-type zinc-finger fold. Catalysis depends on R272, which acts as the Proton donor; for delta-elimination activity.

This sequence belongs to the FPG family. Monomer. Zn(2+) serves as cofactor.

It carries out the reaction Hydrolysis of DNA containing ring-opened 7-methylguanine residues, releasing 2,6-diamino-4-hydroxy-5-(N-methyl)formamidopyrimidine.. The catalysed reaction is 2'-deoxyribonucleotide-(2'-deoxyribose 5'-phosphate)-2'-deoxyribonucleotide-DNA = a 3'-end 2'-deoxyribonucleotide-(2,3-dehydro-2,3-deoxyribose 5'-phosphate)-DNA + a 5'-end 5'-phospho-2'-deoxyribonucleoside-DNA + H(+). In terms of biological role, involved in base excision repair of DNA damaged by oxidation or by mutagenic agents. Acts as a DNA glycosylase that recognizes and removes damaged bases. Has a preference for oxidized purines, such as 7,8-dihydro-8-oxoguanine (8-oxoG). Has AP (apurinic/apyrimidinic) lyase activity and introduces nicks in the DNA strand. Cleaves the DNA backbone by beta-delta elimination to generate a single-strand break at the site of the removed base with both 3'- and 5'-phosphates. The sequence is that of Formamidopyrimidine-DNA glycosylase from Rippkaea orientalis (strain PCC 8801 / RF-1) (Cyanothece sp. (strain PCC 8801)).